The following is a 485-amino-acid chain: FAD-dependent monooxygenase elcH (485 aa).

An N-terminal signal peptide occupies residues 1-19 (MFTLRSLAILAVFAATALA). FAD is bound by residues aspartate 59 and glycine 73. Residues asparagine 126, asparagine 147, and asparagine 157 are each glycosylated (N-linked (GlcNAc...) asparagine).

This sequence belongs to the paxM FAD-dependent monooxygenase family. FAD is required as a cofactor.

The protein operates within secondary metabolite biosynthesis. Functionally, FAD-dependent monooxygenase; part of the gene cluster that mediates the biosynthesis of elsinochrome C, a perelyenequinone phytotoxin structurally similar to cercosporin. The first step of elsinochrome C biosynthesis is performed by the polyketide synthase elcA which catalyzes the formation of nor-toralactone. The starter unit acyltransferase (SAT) domain of elcA initiates polyketide extension by the selective utilization of acetyl-CoA, which is elongated to the heptaketide in the beta-ketoacyl synthase (KS) domain by successive condensations with six malonyl units introduced by the malonyl acyltransferase (MAT) domain. The product template (PT) domain catalyzes C4-C9 and C2-C11 aldol cyclizations and dehydrations to a trihydroxynaphthalene, which is thought to be delivered to the thioesterase (TE) domain for product release. The bifunctional enzyme elcB then methylates nor-toralactone to toralactone before conducting an unusual oxidative aromatic ring opening. The next step in perylenequinone biosynthesis is an O-methylation at the nascent OH-6 of the elcB product performed by the O-methyltransferase elcD. The oxidative coupling of the two monomeric naphthol units in perylenequinone biosynthesis is catalyzed by the FAD-dependent monooxygenase elcE and the multicopper oxidase elcG. ElcG might catalyze the first intermolecular coupling in a regio- and stereo-selective manner via a phenol radical coupling mechanism and the elcE could forge the second C-C bond intramolecularly via a hydride transfer mechanism. The fasciclin domain-containing protein elcF might also play a role duting this step. The last piece of the puzzle in the biosynthesis of elsinochrome C is the additional annulation by enolate coupling to afford the dihydrobenzo(ghi)perylenequinone system, catalyzed by the FAD-dependent monooxygenase elcH. The chain is FAD-dependent monooxygenase elcH from Phaeosphaeria nodorum (strain SN15 / ATCC MYA-4574 / FGSC 10173) (Glume blotch fungus).